We begin with the raw amino-acid sequence, 141 residues long: Large ribosomal subunit protein uL11 (141 aa).

This sequence belongs to the universal ribosomal protein uL11 family. In terms of assembly, part of the ribosomal stalk of the 50S ribosomal subunit. Interacts with L10 and the large rRNA to form the base of the stalk. L10 forms an elongated spine to which L12 dimers bind in a sequential fashion forming a multimeric L10(L12)X complex. Post-translationally, one or more lysine residues are methylated.

Functionally, forms part of the ribosomal stalk which helps the ribosome interact with GTP-bound translation factors. This is Large ribosomal subunit protein uL11 from Wolinella succinogenes (strain ATCC 29543 / DSM 1740 / CCUG 13145 / JCM 31913 / LMG 7466 / NCTC 11488 / FDC 602W) (Vibrio succinogenes).